The sequence spans 383 residues: Protein delta homolog 2 (383 aa).

Residues 1-26 form the signal peptide; that stretch reads MPSGCRCLHLVCLLCILGAPGQPVRA. EGF-like domains lie at 27-58, 62-89, 91-129, and 131-172; these read DDCS…LHCE, RMPG…KFCD, DEHI…RDCE, and KAGP…ARCE. Topologically, residues 27–306 are extracellular; that stretch reads DDCSSHCDLA…RQEAGLGEPS (280 aa). 17 disulfides stabilise this stretch: cysteine 29–cysteine 40, cysteine 33–cysteine 46, cysteine 48–cysteine 57, cysteine 66–cysteine 71, cysteine 79–cysteine 88, cysteine 95–cysteine 107, cysteine 101–cysteine 117, cysteine 119–cysteine 128, cysteine 135–cysteine 148, cysteine 142–cysteine 160, cysteine 162–cysteine 171, cysteine 178–cysteine 189, cysteine 183–cysteine 198, cysteine 200–cysteine 209, cysteine 216–cysteine 227, cysteine 221–cysteine 236, and cysteine 238–cysteine 247. Asparagine 157 carries N-linked (GlcNAc...) asparagine glycosylation. Residues 174 to 210 enclose the EGF-like 5; calcium-binding domain; the sequence is NVDDCLMRPCANGATCLDGINRFSCLCPEGFAGRFCT. Positions 212 to 248 constitute an EGF-like 6; calcium-binding domain; it reads NLDDCASRPCQRGARCRDRVHDFDCLCPSGYGGKTCE. A helical membrane pass occupies residues 307-327; the sequence is LVALVVFGALTAALVLATVLL. Topologically, residues 328 to 383 are cytoplasmic; it reads TLRAWRRGVCPPGPCCYPAPHYAPACQDQECQVSMLPAGLPLPRDLPPEPGKTTAL.

It is found in the membrane. Its function is as follows. Regulates adipogenesis. This is Protein delta homolog 2 (DLK2) from Homo sapiens (Human).